A 147-amino-acid polypeptide reads, in one-letter code: uncharacterized protein (147 aa).

One can recognise an HTH LytTR-type domain in the interval 44–147; it reads LVGYIDKEIH…LKSIKERLSI (104 aa).

It localises to the cytoplasm. This is an uncharacterized protein from Staphylococcus aureus (strain COL).